Reading from the N-terminus, the 459-residue chain is FAD-dependent monooxygenase nanF (459 aa).

Glutamate 49, glycine 62, and arginine 121 together coordinate FAD. Residues arginine 200 and tyrosine 230 contribute to the active site. 2 residues coordinate FAD: aspartate 327 and glycine 340.

The protein belongs to the paxM FAD-dependent monooxygenase family. The cofactor is FAD.

Its pathway is secondary metabolite biosynthesis. FAD-dependent monooxygenase; part of the gene cluster that mediates the biosynthesis of the benzazepine alkaloid nanangelenin A which contains an unprecedented 3,4-dihydro-1-benzazepine-2,5-dione-N-prenyl-N-acetoxy-anthranilamide scaffold. The first step of nanangelenin biosynthesis is catalyzed by the indoleamine 2,3-dioxygenase nanC which produces N-formyl-kynurenine through the catabolism of tryptophan. The two-module NRPS nanA then utilizes anthranilate (Ant) and L-kynurenine (L-Kyn) to assemble the dipeptide product nanangelenin B. The first adenylation domain of nanA (A1) loads anthranilate onto the T1 domain, while A2 loads kynurenine, generated through spontaneous nonenzymatic deformylation of the nanC-supplied N-formyl-kynurenine. The peptide bond formation between the tethered amino acids is catalyzed by the first condensation domain (C1) between anthranilate's carbonyl carbon and kynurenine's aliphatic primary amine. The second C domain (C2) catalyzes the final cyclization event between the aromatic amine of kynurenine and the tethered carbonyl carbon, yielding nanangelenin B. The terminal T3 domain enhances the catalytic efficiency of C2, suggesting the T2-tethered Ant-L-Kyn is transferred to T3 prior to cyclization by C2. Once released from nanA, nanangelenin B is then prenylated by the prenyltransferase nanD to form nanangelenin C. Nanangelenin C is then N-hydroxylated by the FAD-dependent monooxygenase nanF and further acetylated by the acetyltransferase nanB to yield nanangelenin F. Finally, the N-methyltransferase nanE methylates the amide nitrogen of 1-benzazepine to convert nanangelenin F into nanangelenin A. NanE is also able to methylate most of the intermediates of the pathway such as nanangelenin B and nanangelenin C to produce nanangelenin D and nanangelenin E, respectively. The polypeptide is FAD-dependent monooxygenase nanF (Aspergillus nanangensis).